The primary structure comprises 385 residues: MTRTLRITYSLSFLGLLVGMGAWSTGGLQSFQRTEQMTLLNGKLAKAAETHYDAEFPIKRLGTNVWAAMDFKLFNEGRPGVVLGRDQWLFSDEEFKPTAGAEQLMQENLALIRGVRDTLQQHGSQLVLAIVPAKARVYTEYLGKERPASLHDDLYNQFHAQARQANVFAPDLMAPMEQAKARGQVFLRTDTHWTPMGAEVAAQALAEAVSRQSLLNGDPQAFITEAGNTAPYKGDLTNFLPLDPLFSNLLPAPDNLQKRTTRPVDAEGDAGDALFADKQIPVALVGTSYSANPHWNFLGALQQALRSDVANYAEDGHGPLLPMLKYLQSDAFKNAAPQVVVWEFPERYLPMKNDLSSFDPQWIAQLKNSRKSEENLALSSTRTDH.

An N-terminal signal peptide occupies residues 1 to 21 (MTRTLRITYSLSFLGLLVGMG). D190 is an active-site residue. H192 (proton acceptor) is an active-site residue. Catalysis depends on S288, which acts as the Nucleophile.

Belongs to the AlgJ family.

The protein localises to the cell inner membrane. It localises to the periplasm. The protein operates within glycan biosynthesis; alginate biosynthesis. Together with AlgI and AlgF, forms an inner membrane complex which probably interacts with the alginate polymerization-transport complex and adds acetyl groups at the O-2 and O-3 positions of mannuronate residues. Acetylation of alginate is important for the architecture of biofilms and increases the ability of alginate to act as a defense barrier. In Pseudomonas putida (strain ATCC 47054 / DSM 6125 / CFBP 8728 / NCIMB 11950 / KT2440), this protein is Probable alginate O-acetylase AlgJ (algJ).